Reading from the N-terminus, the 242-residue chain is tRNA pseudouridine synthase A (242 aa).

Catalysis depends on Asp51, which acts as the Nucleophile. Tyr107 is a substrate binding site.

This sequence belongs to the tRNA pseudouridine synthase TruA family. In terms of assembly, homodimer.

The catalysed reaction is uridine(38/39/40) in tRNA = pseudouridine(38/39/40) in tRNA. In terms of biological role, formation of pseudouridine at positions 38, 39 and 40 in the anticodon stem and loop of transfer RNAs. This Helicobacter acinonychis (strain Sheeba) protein is tRNA pseudouridine synthase A.